We begin with the raw amino-acid sequence, 613 residues long: Kelch-like protein 36 (613 aa).

One can recognise a BTB domain in the interval 45–112 (CDVVLVVEEQ…LYSSELELDG (68 aa)). The region spanning 147 to 249 (YLYLQELASI…PEDILLQRVK (103 aa)) is the BACK domain. Kelch repeat units lie at residues 294–343 (CLLF…VLGG), 344–395 (FIFI…SIED), 396–442 (MLVA…IYKD), 444–491 (VYIS…SLGD), 492–544 (SIYS…VWQG), and 545–593 (RIYI…VCAL).

In terms of assembly, interacts with CUL3.

It participates in protein modification; protein ubiquitination. Functionally, probable substrate-specific adapter of an E3 ubiquitin-protein ligase complex which mediates the ubiquitination and subsequent proteasomal degradation of target proteins. This chain is Kelch-like protein 36 (Klhl36), found in Mus musculus (Mouse).